A 1032-amino-acid polypeptide reads, in one-letter code: Protein translocase subunit SecA (1032 aa).

ATP contacts are provided by residues glutamine 121, 139 to 143 (GEGKT), and aspartate 570. Residues 945–975 (TAGGSENATEDAPKPAKRGVGGAARRVSNAA) are disordered. Residues cysteine 994, cysteine 996, cysteine 1005, and histidine 1006 each coordinate Zn(2+).

It belongs to the SecA family. Monomer and homodimer. Part of the essential Sec protein translocation apparatus which comprises SecA, SecYEG and auxiliary proteins SecDF. Other proteins may also be involved. The cofactor is Zn(2+).

It localises to the cell membrane. The protein localises to the cytoplasm. The enzyme catalyses ATP + H2O + cellular proteinSide 1 = ADP + phosphate + cellular proteinSide 2.. Part of the Sec protein translocase complex. Interacts with the SecYEG preprotein conducting channel. Has a central role in coupling the hydrolysis of ATP to the transfer of proteins into and across the cell membrane, serving as an ATP-driven molecular motor driving the stepwise translocation of polypeptide chains across the membrane. In Herpetosiphon aurantiacus (strain ATCC 23779 / DSM 785 / 114-95), this protein is Protein translocase subunit SecA.